We begin with the raw amino-acid sequence, 629 residues long: Ionotropic receptor 75a (629 aa).

At 1–335 (MQLVQLANFV…GDVFLQPFSP (335 aa)) the chain is on the extracellular side. 6 N-linked (GlcNAc...) asparagine glycosylation sites follow: Asn61, Asn112, Asn126, Asn144, Asn166, and Asn232. The chain crosses the membrane as a helical span at residues 336 to 356 (LVWYLFGGVLSLIGVLLWITF). Topologically, residues 357-374 (YMECKRMQKRWRLDYLPS) are cytoplasmic. The chain crosses the membrane as a helical span at residues 375–395 (LLSTFLISFGAACIQSSSLIP). Over 396–402 (RSAGGRL) the chain is Extracellular. The helical transmembrane segment at 403 to 423 (IYFALFLISFIMYNYYTSVVV) threads the bilayer. Over 424 to 592 (SSLLSSPVKS…NFVITVGMEY (169 aa)) the chain is Cytoplasmic. The helical transmembrane segment at 593–613 (VAPLLLMLICADILVVVILLV) threads the bilayer. Residues 614–629 (ELAWKRFFTRHLTFHP) lie on the Extracellular side of the membrane.

Belongs to the glutamate-gated ion channel (TC 1.A.10.1) family. Expressed in acetic-acid-sensing neurons in the antennal coeloconic 2 (ac2) and antennal coeloconic 3 (ac3) sensilla class of sensory hairs (at protein level).

The protein localises to the cell membrane. Its subcellular location is the cell projection. The protein resides in the dendrite. In terms of biological role, odorant receptor for acetic and propionic acid. Functions as part of an olfactory receptor complex including the ionotropic receptor coreceptor Ir8a. This chain is Ionotropic receptor 75a, found in Drosophila melanogaster (Fruit fly).